The sequence spans 261 residues: Arcelin-5A (261 aa).

Residues 1–21 form the signal peptide; the sequence is MASSKLLSLALFLVLLTHANS. N-linked (GlcNAc...) asparagine glycans are attached at residues asparagine 43, asparagine 91, and asparagine 100. A disulfide bridge connects residues cysteine 167 and cysteine 203. A propeptide spanning residues 255–261 is cleaved from the precursor; sequence ILLNNIL.

The protein belongs to the leguminous lectin family. As to quaternary structure, monomer. Post-translationally, the C-terminal segment appears to be highly susceptible to proteolysis.

Functionally, seed storage. This carbohydrate-binding lectin has toxic effects on bean bruchid pests. The protein is Arcelin-5A (ARC5A) of Phaseolus vulgaris (Kidney bean).